A 577-amino-acid chain; its full sequence is Signal peptide peptidase-like 2B (577 aa).

The signal sequence occupies residues 1–19; that stretch reads MAAARLAASLLLLAAQVAC. The Lumenal segment spans residues 20 to 168; it reads EFGVLRVVPQ…APSEPVMDYN (149 aa). The PA domain occupies 49-149; it reads LPHDLNKVSL…RDLQDIFRRF (101 aa). N-linked (GlcNAc...) asparagine glycosylation is present at N91. The chain crosses the membrane as a helical span at residues 169–189; it reads MVIIFIMAVGTVALGGYWAGS. At 190 to 216 the chain is on the cytoplasmic side; the sequence is HDVKKYMKHKRDDVPEKQEDEAVDVTP. A helical transmembrane segment spans residues 217–237; it reads VMICVFVVMCCFMLVLLYYFY. The Lumenal segment spans residues 238–239; that stretch reads DR. The helical transmembrane segment at 240–260 threads the bilayer; that stretch reads LVYVIIGIFCLASSTGLYSCL. Residues 261 to 286 are Cytoplasmic-facing; sequence APCVRKLPFCTCRVPDNNLPYFHKRP. A helical membrane pass occupies residues 287 to 307; the sequence is QARMLLLALFCVTVSVVWGVF. The Lumenal portion of the chain corresponds to 308-312; sequence RNEDQ. A helical membrane pass occupies residues 313–333; the sequence is WAWVLQDTLGIAFCLYMLRTI. At 334-341 the chain is on the cytoplasmic side; it reads RLPTFKAC. The helical transmembrane segment at 342–362 threads the bilayer; sequence TLLLLVLFVYDIFFVFITPYL. Residue D352 is part of the active site. At 363–405 the chain is on the lumenal side; the sequence is TKSGNSIMVEVATGPSNSSTHEKLPMVLKVPRLNTSPLSLCDR. Residues 406–426 form a helical membrane-spanning segment; that stretch reads PFSLLGFGDILVPGLLVAYCH. The active site involves D414. Over 427–438 the chain is Cytoplasmic; it reads RFDIQVQSSRIY. Residues 439 to 459 traverse the membrane as a helical segment; it reads FVACTIAYGLGLLVTFVALVL. Residues 460 to 463 are Lumenal-facing; that stretch reads MRHG. A helical membrane pass occupies residues 464–484; that stretch reads QPALLYLVPCTLLTSCTVALW. Positions 465–467 match the PAL motif; that stretch reads PAL. The Cytoplasmic portion of the chain corresponds to 485 to 577; that stretch reads RREMGAFWTG…IPVVTPGTSA (93 aa). A disordered region spans residues 502-577; the sequence is QTPWAAPQGP…IPVVTPGTSA (76 aa).

It belongs to the peptidase A22B family. Monomer. Homodimer. Interacts with ITM2B and TNF. In terms of processing, glycosylated.

The protein localises to the cell membrane. It localises to the golgi apparatus membrane. The protein resides in the lysosome membrane. It is found in the endosome membrane. Its subcellular location is the membrane. In terms of biological role, intramembrane-cleaving aspartic protease (I-CLiP) that cleaves type II membrane signal peptides in the hydrophobic plane of the membrane. Functions in ITM2B and TNF processing. Catalyzes the intramembrane cleavage of the anchored fragment of shed TNF-alpha (TNF), which promotes the release of the intracellular domain (ICD) for signaling to the nucleus. May play a role in the regulation of innate and adaptive immunity. The chain is Signal peptide peptidase-like 2B from Rattus norvegicus (Rat).